The following is a 211-amino-acid chain: 2,3-bisphosphoglycerate-dependent phosphoglycerate mutase (211 aa).

Substrate-binding positions include 9–16, 22–23, Arg61, 88–91, Lys99, 115–116, and 159–160; these read RHGQSEWN, TG, ERDY, RR, and GN. His10 (tele-phosphohistidine intermediate) is an active-site residue. The active-site Proton donor/acceptor is Glu88.

It belongs to the phosphoglycerate mutase family. BPG-dependent PGAM subfamily. Homodimer.

The catalysed reaction is (2R)-2-phosphoglycerate = (2R)-3-phosphoglycerate. The protein operates within carbohydrate degradation; glycolysis; pyruvate from D-glyceraldehyde 3-phosphate: step 3/5. In terms of biological role, catalyzes the interconversion of 2-phosphoglycerate and 3-phosphoglycerate. In Sinorhizobium fredii (strain NBRC 101917 / NGR234), this protein is 2,3-bisphosphoglycerate-dependent phosphoglycerate mutase.